We begin with the raw amino-acid sequence, 108 residues long: Small ribosomal subunit protein bS16 (108 aa).

The tract at residues glutamate 82 to asparagine 108 is disordered. Residues proline 96–asparagine 108 are compositionally biased toward basic residues.

It belongs to the bacterial ribosomal protein bS16 family.

This is Small ribosomal subunit protein bS16 from Mycoplasma mycoides subsp. mycoides SC (strain CCUG 32753 / NCTC 10114 / PG1).